We begin with the raw amino-acid sequence, 164 residues long: Interleukin-36 beta (164 aa).

The propeptide occupies 1-4; the sequence is MNPQ.

The protein belongs to the IL-1 family. In terms of assembly, interacts with cargo receptor TMED10; the interaction mediates the translocation from the cytoplasm into the ERGIC (endoplasmic reticulum-Golgi intermediate compartment) and thereby secretion. In terms of processing, N-terminal truncation leads to a dramatic enhancement of its activity (&gt;1000-fold). As to expression, expression at low levels in tonsil, bone marrow, heart, placenta, lung, testis and colon but not in any hematopoietic cell lines. Not detected in adipose tissue. Expressed at higher levels in psoriatic plaques than in symptomless psoriatic skin or healthy control skin. Increased levels are not detected in inflamed joint tissue.

The protein resides in the cytoplasm. It localises to the secreted. In terms of biological role, cytokine that binds to and signals through the IL1RL2/IL-36R receptor which in turn activates NF-kappa-B and MAPK signaling pathways in target cells linked to a pro-inflammatory response. Part of the IL-36 signaling system that is thought to be present in epithelial barriers and to take part in local inflammatory response; similar to the IL-1 system with which it shares the coreceptor IL1RAP. Stimulates production of interleukin-6 and interleukin-8 in synovial fibrobasts, articular chondrocytes and mature adipocytes. Induces expression of a number of antimicrobial peptides including beta-defensins 4 and 103 as well as a number of matrix metalloproteases. Seems to be involved in skin inflammatory response by acting on keratinocytes, dendritic cells and indirectly on T-cells to drive tissue infiltration, cell maturation and cell proliferation. In cultured keratinocytes induces the expression of macrophage, T-cell, and neutrophil chemokines, such as CCL3, CCL4, CCL5, CCL2, CCL17, CCL22, CL20, CCL5, CCL2, CCL17, CCL22, CXCL8, CCL20 and CXCL1, and the production of pro-inflammatory cytokines such as TNF-alpha, IL-8 and IL-6. This chain is Interleukin-36 beta, found in Homo sapiens (Human).